Here is a 179-residue protein sequence, read N- to C-terminus: Putative BPIFA4P protein (179 aa).

The N-terminal stretch at methionine 1 to alanine 20 is a signal peptide.

The protein belongs to the BPI/LBP/Plunc superfamily. Plunc family. Expressed in breast cancer and salivary gland.

It localises to the secreted. Functionally, major protein in sweat, has surfactant properties. The chain is Putative BPIFA4P protein (BPIFA4P) from Homo sapiens (Human).